A 432-amino-acid chain; its full sequence is ATP-dependent RNA helicase SUB2 (432 aa).

Residues 1-17 (MSAEGQEELLDYSDSEE) show a composition bias toward acidic residues. The interval 1–35 (MSAEGQEELLDYSDSEEIAVPSNAPEAGADGADKD) is disordered. Positions 48–76 (TGFRDFLLKPELLRAIGDCGFEHPSEVQQ) match the Q motif motif. Residues 79–254 (IPQSILGTDV…KKFMQNPLEI (176 aa)) enclose the Helicase ATP-binding domain. 92–99 (AKSGLGKT) lines the ATP pocket. The DEAD box signature appears at 201–204 (DECD). Residues 266–427 (GLQQYYLKLD…EFPEEGVDSS (162 aa)) form the Helicase C-terminal domain.

This sequence belongs to the DEAD box helicase family. DECD subfamily.

Its subcellular location is the nucleus. It carries out the reaction ATP + H2O = ADP + phosphate + H(+). ATP-binding RNA helicase involved in transcription elongation and required for the export of mRNA out of the nucleus. SUB2 also plays a role in pre-mRNA splicing and spliceosome assembly. May be involved in rDNA and telomeric silencing, and maintenance of genome integrity. This is ATP-dependent RNA helicase SUB2 (SUB2) from Meyerozyma guilliermondii (strain ATCC 6260 / CBS 566 / DSM 6381 / JCM 1539 / NBRC 10279 / NRRL Y-324) (Yeast).